We begin with the raw amino-acid sequence, 63 residues long: Large ribosomal subunit protein uL29 (63 aa).

This sequence belongs to the universal ribosomal protein uL29 family.

The polypeptide is Large ribosomal subunit protein uL29 (Hahella chejuensis (strain KCTC 2396)).